The chain runs to 700 residues: Pentatricopeptide repeat-containing protein At3g26540 (700 aa).

17 PPR repeats span residues 95 to 125 (PIFL…MPER), 126 to 160 (DGGS…GVRA), 161 to 195 (TETS…GYSG), 196 to 226 (NVDL…IVNP), 227 to 261 (SDVS…NVRP), 262 to 296 (LNHT…SVVA), 297 to 327 (DTVV…TRSK), 328 to 362 (DLKS…NIVS), 363 to 389 (WNAM…MRQE), 394 to 428 (DNVT…GYDT), 429 to 459 (NVIV…MSEL), 461 to 495 (DEVS…AKPS), 497 to 529 (YTLA…GYKI), 530 to 560 (DVVI…AATR), 561 to 595 (DLIL…GVKP), 596 to 626 (DHVT…MSTK), and 632 to 662 (QVEH…MPFD).

This sequence belongs to the PPR family. PCMP-A subfamily.

The chain is Pentatricopeptide repeat-containing protein At3g26540 (PCMP-A5) from Arabidopsis thaliana (Mouse-ear cress).